Consider the following 122-residue polypeptide: Serum amyloid A-1 protein (122 aa).

The first 18 residues, 1-18, serve as a signal peptide directing secretion; the sequence is MKPFVAIIFCFLILGVDS. The interval 19-45 is important for amyloid formation; the sequence is QRWFQFMKEAGQGTRDMWRAYTDMREA. Positions 100-122 are disordered; it reads ANEWGRSGKDPNFFRPPGLPSKY.

Belongs to the SAA family. As to quaternary structure, homohexamer; dimer of trimers. Can form amyloid fibrils after partial proteolysis; the native, undenatured protein does not form amyloid fibrils (in vitro). Apolipoprotein of the HDL complex. Binds to heparin. As to expression, detected in liver, spleen and kidney.

The protein resides in the secreted. Its function is as follows. Major acute phase protein. This Mesocricetus auratus (Golden hamster) protein is Serum amyloid A-1 protein (SAA1).